The sequence spans 1345 residues: DNA-directed RNA polymerase subunit beta (1345 aa).

It belongs to the RNA polymerase beta chain family. The RNAP catalytic core consists of 2 alpha, 1 beta, 1 beta' and 1 omega subunit. When a sigma factor is associated with the core the holoenzyme is formed, which can initiate transcription.

The catalysed reaction is RNA(n) + a ribonucleoside 5'-triphosphate = RNA(n+1) + diphosphate. DNA-dependent RNA polymerase catalyzes the transcription of DNA into RNA using the four ribonucleoside triphosphates as substrates. The polypeptide is DNA-directed RNA polymerase subunit beta (Shewanella oneidensis (strain ATCC 700550 / JCM 31522 / CIP 106686 / LMG 19005 / NCIMB 14063 / MR-1)).